The chain runs to 133 residues: Small ribosomal subunit protein uS8c (133 aa).

Belongs to the universal ribosomal protein uS8 family. As to quaternary structure, part of the 30S ribosomal subunit.

The protein resides in the plastid. The protein localises to the chloroplast. Its function is as follows. One of the primary rRNA binding proteins, it binds directly to 16S rRNA central domain where it helps coordinate assembly of the platform of the 30S subunit. The polypeptide is Small ribosomal subunit protein uS8c (rps8) (Cyanidium caldarium (Red alga)).